A 431-amino-acid chain; its full sequence is Enolase (431 aa).

(2R)-2-phosphoglycerate is bound at residue Q167. Residue E209 is the Proton donor of the active site. Positions 246, 289, and 316 each coordinate Mg(2+). The (2R)-2-phosphoglycerate site is built by K341, R370, S371, and K392. K341 acts as the Proton acceptor in catalysis.

The protein belongs to the enolase family. As to quaternary structure, component of the RNA degradosome, a multiprotein complex involved in RNA processing and mRNA degradation. Mg(2+) serves as cofactor.

It localises to the cytoplasm. The protein resides in the secreted. Its subcellular location is the cell surface. The catalysed reaction is (2R)-2-phosphoglycerate = phosphoenolpyruvate + H2O. Its pathway is carbohydrate degradation; glycolysis; pyruvate from D-glyceraldehyde 3-phosphate: step 4/5. In terms of biological role, catalyzes the reversible conversion of 2-phosphoglycerate (2-PG) into phosphoenolpyruvate (PEP). It is essential for the degradation of carbohydrates via glycolysis. The chain is Enolase from Shewanella sp. (strain ANA-3).